The following is a 254-amino-acid chain: Methyl-CpG-binding domain-containing protein 11 (254 aa).

Positions 4 to 74 (EEEVVSVELP…AEFDWTTSGT (71 aa)) constitute an MBD domain. Positions 56–254 (KSHPGNPAIA…EKTAEGEATG (199 aa)) are disordered. 4 stretches are compositionally biased toward basic and acidic residues: residues 80 to 97 (RISE…EPPK), 107 to 130 (SKKD…KDTE), 151 to 162 (ETERVNDAKENI), and 178 to 254 (ESMK…EATG). Ser116 bears the Phosphoserine mark.

In terms of tissue distribution, expressed in leaves (around hydathodes), buds, flowers (carpels and pollen grains), stems (around nodes), siliques, mature seeds and roots.

It localises to the nucleus. Its function is as follows. Transcriptional regulator that binds DNA independently of its methylation status. Required during plant organogenesis and development. This is Methyl-CpG-binding domain-containing protein 11 (MBD11) from Arabidopsis thaliana (Mouse-ear cress).